The primary structure comprises 336 residues: D-erythrose-4-phosphate dehydrogenase (336 aa).

Residues 11–12 and Arg-80 each bind NAD(+); that span reads RI. Substrate contacts are provided by residues 153–155, Arg-199, 212–213, and Arg-235; these read SCT and TK. Cys-154 acts as the Nucleophile in catalysis. Asn-317 serves as a coordination point for NAD(+).

This sequence belongs to the glyceraldehyde-3-phosphate dehydrogenase family. Epd subfamily. In terms of assembly, homotetramer.

Its subcellular location is the cytoplasm. It carries out the reaction D-erythrose 4-phosphate + NAD(+) + H2O = 4-phospho-D-erythronate + NADH + 2 H(+). Its pathway is cofactor biosynthesis; pyridoxine 5'-phosphate biosynthesis; pyridoxine 5'-phosphate from D-erythrose 4-phosphate: step 1/5. In terms of biological role, catalyzes the NAD-dependent conversion of D-erythrose 4-phosphate to 4-phosphoerythronate. This is D-erythrose-4-phosphate dehydrogenase from Aeromonas hydrophila subsp. hydrophila (strain ATCC 7966 / DSM 30187 / BCRC 13018 / CCUG 14551 / JCM 1027 / KCTC 2358 / NCIMB 9240 / NCTC 8049).